Consider the following 491-residue polypeptide: Chromosomal replication initiator protein DnaA (491 aa).

The interval 1–69 is domain I, interacts with DnaA modulators; that stretch reads MTTWDKCLKK…TIQECHGNDL (69 aa). The tract at residues 69 to 154 is domain II; it reads LIIEYSNKKF…KEDEEYSFGL (86 aa). A domain III, AAA+ region region spans residues 155–371; sequence PLKEKYVFDS…GALNRVLTTS (217 aa). Residues Gly199, Gly201, Lys202, and Thr203 each coordinate ATP. Residues 372–491 form a domain IV, binds dsDNA region; the sequence is KFNHKDPTIE…YELLLDKISR (120 aa).

This sequence belongs to the DnaA family. As to quaternary structure, oligomerizes as a right-handed, spiral filament on DNA at oriC.

The protein localises to the cytoplasm. Its function is as follows. Plays an essential role in the initiation and regulation of chromosomal replication. ATP-DnaA binds to the origin of replication (oriC) to initiate formation of the DNA replication initiation complex once per cell cycle. Binds the DnaA box (a 9 base pair repeat at the origin) and separates the double-stranded (ds)DNA. Forms a right-handed helical filament on oriC DNA; dsDNA binds to the exterior of the filament while single-stranded (ss)DNA is stabiized in the filament's interior. The ATP-DnaA-oriC complex binds and stabilizes one strand of the AT-rich DNA unwinding element (DUE), permitting loading of DNA polymerase. After initiation quickly degrades to an ADP-DnaA complex that is not apt for DNA replication. Binds acidic phospholipids. The protein is Chromosomal replication initiator protein DnaA of Francisella tularensis subsp. novicida (strain U112).